We begin with the raw amino-acid sequence, 188 residues long: dCTP deaminase (188 aa).

Residues 111–116 (KSTYAR), 135–137 (TLE), Q156, Y170, K179, and Q180 each bind dCTP. Catalysis depends on E137, which acts as the Proton donor/acceptor.

This sequence belongs to the dCTP deaminase family. Homotrimer.

It carries out the reaction dCTP + H2O + H(+) = dUTP + NH4(+). It participates in pyrimidine metabolism; dUMP biosynthesis; dUMP from dCTP (dUTP route): step 1/2. Functionally, catalyzes the deamination of dCTP to dUTP. The sequence is that of dCTP deaminase from Rickettsia bellii (strain OSU 85-389).